The following is a 138-amino-acid chain: MVGSSEAGGEAWRGRYYRLEEVQKHNNSQSTWIIVHHRIYDITKFLDEHPGGEEVLREQAGGDATENFEDVGHSTDARALSETFIIGELHPDDRPKLQKPAETLITTVQSNSSSWSNWVIPAIAAIIVALMYRSYMSE.

The Cytochrome b5 heme-binding domain occupies 14 to 90; sequence GRYYRLEEVQ…SETFIIGELH (77 aa). Heme contacts are provided by His49 and His73. The helical transmembrane segment at 114–136 threads the bilayer; sequence SWSNWVIPAIAAIIVALMYRSYM.

It belongs to the cytochrome b5 family.

The protein localises to the endoplasmic reticulum membrane. Its subcellular location is the microsome membrane. Cytochrome b5 is a membrane-bound hemoprotein functioning as an electron carrier for several membrane-bound oxygenases. The polypeptide is Cytochrome b5 (CYB5A) (Gallus gallus (Chicken)).